The following is a 98-amino-acid chain: Large ribosomal subunit protein bL28 (98 aa).

The protein belongs to the bacterial ribosomal protein bL28 family.

The polypeptide is Large ribosomal subunit protein bL28 (Bartonella bacilliformis (strain ATCC 35685 / KC583 / Herrer 020/F12,63)).